We begin with the raw amino-acid sequence, 284 residues long: Shikimate dehydrogenase (NADP(+)) (284 aa).

Shikimate is bound by residues 20-22 (SIS) and S67. K71 functions as the Proton acceptor in the catalytic mechanism. NADP(+) is bound at residue D83. Shikimate is bound by residues N92 and D107. NADP(+) is bound by residues 129–133 (GAGGA) and I227. Y229 contacts shikimate. G250 is a binding site for NADP(+).

It belongs to the shikimate dehydrogenase family. As to quaternary structure, homodimer.

The enzyme catalyses shikimate + NADP(+) = 3-dehydroshikimate + NADPH + H(+). It participates in metabolic intermediate biosynthesis; chorismate biosynthesis; chorismate from D-erythrose 4-phosphate and phosphoenolpyruvate: step 4/7. Involved in the biosynthesis of the chorismate, which leads to the biosynthesis of aromatic amino acids. Catalyzes the reversible NADPH linked reduction of 3-dehydroshikimate (DHSA) to yield shikimate (SA). This Streptococcus pneumoniae (strain JJA) protein is Shikimate dehydrogenase (NADP(+)).